The primary structure comprises 194 residues: Fibroblast growth factor 7 (194 aa).

The first 31 residues, 1 to 31 (MRKWILTWILPTLLYRSCFHIICLVGTISLA), serve as a signal peptide directing secretion. Residue Asn-45 is glycosylated (N-linked (GlcNAc...) asparagine).

The protein belongs to the heparin-binding growth factors family. Interacts with FGFBP1. Interacts with FGFR2. Affinity between fibroblast growth factors (FGFs) and their receptors is increased by heparan sulfate glycosaminoglycans that function as coreceptors.

It localises to the secreted. Plays an important role in the regulation of embryonic development, cell proliferation and cell differentiation. Required for normal branching morphogenesis. Growth factor active on keratinocytes. Possible major paracrine effector of normal epithelial cell proliferation. The sequence is that of Fibroblast growth factor 7 (FGF7) from Canis lupus familiaris (Dog).